The chain runs to 129 residues: Small ribosomal subunit protein uS9 (129 aa).

Belongs to the universal ribosomal protein uS9 family.

The protein is Small ribosomal subunit protein uS9 of Chlorobium phaeobacteroides (strain DSM 266 / SMG 266 / 2430).